Reading from the N-terminus, the 383-residue chain is Chaperone protein DnaJ (383 aa).

The region spanning 5–70 (DYYDVLGVSK…DKKAAYDRYG (66 aa)) is the J domain. Residues 142–220 (GMQKTISVPG…CRGAGREEKT (79 aa)) form a CR-type zinc finger. Residues cysteine 155, cysteine 158, cysteine 172, cysteine 175, cysteine 194, cysteine 197, cysteine 208, and cysteine 211 each contribute to the Zn(2+) site. 4 CXXCXGXG motif repeats span residues 155 to 162 (CSACEGTG), 172 to 179 (CPTCSGMG), 194 to 201 (CPTCSGMG), and 208 to 215 (CQACRGAG).

The protein belongs to the DnaJ family. Homodimer. Zn(2+) serves as cofactor.

It is found in the cytoplasm. Its function is as follows. Participates actively in the response to hyperosmotic and heat shock by preventing the aggregation of stress-denatured proteins and by disaggregating proteins, also in an autonomous, DnaK-independent fashion. Unfolded proteins bind initially to DnaJ; upon interaction with the DnaJ-bound protein, DnaK hydrolyzes its bound ATP, resulting in the formation of a stable complex. GrpE releases ADP from DnaK; ATP binding to DnaK triggers the release of the substrate protein, thus completing the reaction cycle. Several rounds of ATP-dependent interactions between DnaJ, DnaK and GrpE are required for fully efficient folding. Also involved, together with DnaK and GrpE, in the DNA replication of plasmids through activation of initiation proteins. The polypeptide is Chaperone protein DnaJ (Dinoroseobacter shibae (strain DSM 16493 / NCIMB 14021 / DFL 12)).